The primary structure comprises 403 residues: 8-amino-7-oxononanoate synthase (403 aa).

Residue Arg-22 participates in substrate binding. Residue 109–110 (GF) participates in pyridoxal 5'-phosphate binding. His-134 contacts substrate. 3 residues coordinate pyridoxal 5'-phosphate: Ser-178, His-206, and Thr-232. Lys-235 bears the N6-(pyridoxal phosphate)lysine mark. Thr-348 contributes to the substrate binding site. The interval 383–403 (SNDSGSKPSIESSFELKKEAQ) is disordered. A compositionally biased stretch (polar residues) spans 385 to 394 (DSGSKPSIES).

It belongs to the class-II pyridoxal-phosphate-dependent aminotransferase family. BioF subfamily. As to quaternary structure, homodimer. The cofactor is pyridoxal 5'-phosphate.

The catalysed reaction is 6-carboxyhexanoyl-[ACP] + L-alanine + H(+) = (8S)-8-amino-7-oxononanoate + holo-[ACP] + CO2. Its pathway is cofactor biosynthesis; biotin biosynthesis. In terms of biological role, catalyzes the decarboxylative condensation of pimeloyl-[acyl-carrier protein] and L-alanine to produce 8-amino-7-oxononanoate (AON), [acyl-carrier protein], and carbon dioxide. The chain is 8-amino-7-oxononanoate synthase from Vibrio atlanticus (strain LGP32) (Vibrio splendidus (strain Mel32)).